Here is a 196-residue protein sequence, read N- to C-terminus: uncharacterized protein (196 aa).

The region spanning H58–N163 is the Bro-N domain.

This is an uncharacterized protein from Acanthamoeba polyphaga mimivirus (APMV).